Here is a 472-residue protein sequence, read N- to C-terminus: POU domain, class 5, transcription factor 1 (472 aa).

2 disordered regions span residues 127 to 154 (MPSE…YHLT) and 187 to 255 (ISQA…LTTE). The span at 220 to 234 (TAQNIPSAQAQSAPR) shows a compositional bias: polar residues. Low complexity predominate over residues 235 to 245 (SSGSSSGGCSN). Residues 246–255 (SEEEETLTTE) are compositionally biased toward acidic residues. In terms of domain architecture, POU-specific spans 249 to 323 (EETLTTEDLE…LLQRWLNEAE (75 aa)). The homeobox DNA-binding region spans 343–402 (KRKRRTSLEGTVRSALESYFVKCPKPNTLEITHISDDLGLERDVVRVWFCNRRQKGKRLA).

This sequence belongs to the POU transcription factor family. Class-7 subfamily.

It localises to the nucleus. Functionally, involved in early development of embryos, especially in the process of gastrulation. May play an important role in establishing and specifying rhombomeric segments. Seems to be required to maintain the cells in a highly undifferentiated state. In contrast to POU2, T-POU2 lacks DNA-binding activity because of its incomplete pou domain structure. Overexpression of POU2 does not have any effect on development, whereas overexpression of t-POU2 causes developmental retardation or arrest before gastrulation. In Danio rerio (Zebrafish), this protein is POU domain, class 5, transcription factor 1 (pou5f1).